The sequence spans 362 residues: Oxygen-dependent coproporphyrinogen-III oxidase (362 aa).

Ser-118 is a binding site for substrate. The a divalent metal cation site is built by His-122 and His-132. His-132 serves as the catalytic Proton donor. Residue 134–136 (NYR) coordinates substrate. Positions 166 and 196 each coordinate a divalent metal cation. The segment at 286–321 (YVEFNLVWDRGTIFGLQTNGRTESILMSLPPLVRWE) is important for dimerization.

This sequence belongs to the aerobic coproporphyrinogen-III oxidase family. Homodimer. The cofactor is a divalent metal cation.

The protein localises to the cytoplasm. It carries out the reaction coproporphyrinogen III + O2 + 2 H(+) = protoporphyrinogen IX + 2 CO2 + 2 H2O. Its pathway is porphyrin-containing compound metabolism; protoporphyrin-IX biosynthesis; protoporphyrinogen-IX from coproporphyrinogen-III (O2 route): step 1/1. Involved in the heme and chlorophyll biosynthesis. Catalyzes the aerobic oxidative decarboxylation of propionate groups of rings A and B of coproporphyrinogen-III to yield the vinyl groups in protoporphyrinogen-IX. This is Oxygen-dependent coproporphyrinogen-III oxidase from Synechococcus sp. (strain CC9605).